A 466-amino-acid polypeptide reads, in one-letter code: 55 kDa erythrocyte membrane protein (466 aa).

Residue T2 is modified to N-acetylthreonine. S13 and S19 each carry phosphoserine. T49 carries the post-translational modification Phosphothreonine. Phosphoserine is present on residues S52, S57, and S110. In terms of domain architecture, PDZ spans 71–152; sequence LIQIEKVTEE…MISLKVIPNQ (82 aa). The SH3 domain occupies 158–228; the sequence is ALQMFMRAQF…PSPELQEWRV (71 aa). S243 carries the phosphoserine modification. The interval 268–466 is interaction with PALS1; that stretch reads VVSYEEVVRL…PQWVPVSWVY (199 aa). The region spanning 282 to 451 is the Guanylate kinase-like domain; the sequence is RKTLVLIGAS…TLKKLQEAFD (170 aa).

It belongs to the MAGUK family. As to quaternary structure, heterodimer with PALS1. Interacts with DLG5 and NF2. Interacts (via guanylate kinase-like domain) with WHRN (via third PDZ domain). Palmitoylated.

Its subcellular location is the cell membrane. It localises to the cell projection. It is found in the stereocilium. In terms of biological role, essential regulator of neutrophil polarity. Regulates neutrophil polarization by regulating AKT1 phosphorylation through a mechanism that is independent of PIK3CG activity. This is 55 kDa erythrocyte membrane protein (MPP1) from Papio anubis (Olive baboon).